Consider the following 361-residue polypeptide: Phenylalanine 4-monooxygenase, chloroplastic (361 aa).

The N-terminal 55 residues, 1 to 55 (MLALRQGALLLSARGGQTTHDNLQLCAGPSRRPRARWISSAPRPSTLVERHIRPQ), are a transit peptide targeting the chloroplast. The disordered stretch occupies residues 47-67 (LVERHIRPQASTASDATTSTS). Residues 56-67 (ASTASDATTSTS) show a composition bias toward low complexity. Residues H227, H232, and E272 each contribute to the Fe cation site.

Belongs to the biopterin-dependent aromatic amino acid hydroxylase family. It depends on Fe(2+) as a cofactor.

The protein localises to the plastid. Its subcellular location is the chloroplast. The enzyme catalyses (6R)-L-erythro-5,6,7,8-tetrahydrobiopterin + L-phenylalanine + O2 = (4aS,6R)-4a-hydroxy-L-erythro-5,6,7,8-tetrahydrobiopterin + L-tyrosine. Functionally, catalyzes the hydroxylation of L-phenylalanine to L-tyrosine. Can functionally complement an Escherichia coli tyrosine auxotroph. This chain is Phenylalanine 4-monooxygenase, chloroplastic, found in Chlamydomonas reinhardtii (Chlamydomonas smithii).